Consider the following 107-residue polypeptide: Ornithine carbamoyltransferase, catabolic (107 aa).

Carbamoyl phosphate is bound by residues 57–61 (STRTR) and glutamine 84.

Belongs to the aspartate/ornithine carbamoyltransferase superfamily. OTCase family.

It localises to the cytoplasm. The catalysed reaction is carbamoyl phosphate + L-ornithine = L-citrulline + phosphate + H(+). It participates in amino-acid degradation; L-arginine degradation via ADI pathway; carbamoyl phosphate from L-arginine: step 2/2. The protein is Ornithine carbamoyltransferase, catabolic (arcB) of Streptococcus pyogenes.